The chain runs to 263 residues: Small ribosomal subunit protein eS1 (263 aa).

A compositionally biased stretch (basic and acidic residues) spans 235–254 (HGEGGGGKREAGDKSERPEG). A disordered region spans residues 235-263 (HGEGGGGKREAGDKSERPEGYEPPVQESV).

The protein belongs to the eukaryotic ribosomal protein eS1 family. Component of the small ribosomal subunit. Mature ribosomes consist of a small (40S) and a large (60S) subunit. The 40S subunit contains about 33 different proteins and 1 molecule of RNA (18S). The 60S subunit contains about 49 different proteins and 3 molecules of RNA (28S, 5.8S and 5S).

The protein localises to the cytoplasm. The polypeptide is Small ribosomal subunit protein eS1 (Bombyx mandarina (Wild silk moth)).